A 185-amino-acid polypeptide reads, in one-letter code: MSPSLQEGAQLGESKPSTCSFSIERILGLDQKKDCVPLMKPHRPWADTCSSSGKDGNLCLHVPNPPSGISFPSVVDHPMPEERASKYENYFSASERLSLKRELSWYRGRRPRTAFTQNQIEVLENVFRVNCYPGIDIREDLAQKLNLEEDRIQIWFQNRRAKLKRSHRESQFLMAKKNFNTNLLE.

Residues glycine 108 to histidine 167 constitute a DNA-binding region (homeobox).

It belongs to the ANF homeobox family. In terms of assembly, can form heterodimers with PROP1 in binding to DNA. Interacts with TLE1.

The protein localises to the nucleus. In terms of biological role, required for the normal development of the forebrain, eyes and other anterior structures such as the olfactory placodes and pituitary gland. Possible transcriptional repressor. Binds to the palindromic PIII sequence, 5'-AGCTTGAGTCTAATTGAATTAACTGTAC-3'. HESX1 and PROP1 bind as heterodimers on this palindromic site, and, in vitro, HESX1 can antagonize PROP1 activation. The chain is Homeobox expressed in ES cells 1 (HESX1) from Pan paniscus (Pygmy chimpanzee).